The primary structure comprises 430 residues: Enolase (430 aa).

Residue Q163 coordinates (2R)-2-phosphoglycerate. The active-site Proton donor is E205. Mg(2+) contacts are provided by D242, E286, and D313. K338, R367, S368, and K389 together coordinate (2R)-2-phosphoglycerate. K338 (proton acceptor) is an active-site residue.

The protein belongs to the enolase family. Mg(2+) is required as a cofactor.

The protein localises to the cytoplasm. It localises to the secreted. It is found in the cell surface. The catalysed reaction is (2R)-2-phosphoglycerate = phosphoenolpyruvate + H2O. It functions in the pathway carbohydrate degradation; glycolysis; pyruvate from D-glyceraldehyde 3-phosphate: step 4/5. Catalyzes the reversible conversion of 2-phosphoglycerate (2-PG) into phosphoenolpyruvate (PEP). It is essential for the degradation of carbohydrates via glycolysis. The polypeptide is Enolase (Geotalea daltonii (strain DSM 22248 / JCM 15807 / FRC-32) (Geobacter daltonii)).